Consider the following 135-residue polypeptide: Interleukin-5 (135 aa).

Residues M1–A19 form the signal peptide. Residues N48, N77, and N91 are each glycosylated (N-linked (GlcNAc...) asparagine).

Belongs to the IL-5 family. As to quaternary structure, homodimer; disulfide-linked. Interacts with IL5RA. Interacts with CSF2RB.

Its subcellular location is the secreted. Homodimeric cytokine expressed predominantly by T-lymphocytes and NK cells that plays an important role in the survival, differentiation, and chemotaxis of eosinophils. Also acts on activated and resting B-cells to induce immunoglobulin production, growth, and differentiation. Mechanistically, exerts its biological effects through a receptor composed of IL5RA subunit and the cytokine receptor common subunit beta/CSF2RB. Binding to the receptor leads to activation of various kinases including LYN, SYK and JAK2 and thereby propagates signals through the RAS-MAPK and JAK-STAT5 pathways respectively. This Cavia porcellus (Guinea pig) protein is Interleukin-5 (IL5).